The primary structure comprises 157 residues: Large ribosomal subunit protein uL15 (157 aa).

The tract at residues 1 to 41 (MKLHELSDNPGATKKRKRVGRGPGSGTGKMGGRGIKGQKSR) is disordered. A compositionally biased stretch (gly residues) spans 21-35 (RGPGSGTGKMGGRGI).

It belongs to the universal ribosomal protein uL15 family. Part of the 50S ribosomal subunit.

In terms of biological role, binds to the 23S rRNA. This is Large ribosomal subunit protein uL15 from Jannaschia sp. (strain CCS1).